The primary structure comprises 577 residues: Arginine--tRNA ligase (577 aa).

The short motif at proline 122–histidine 132 is the 'HIGH' region element.

Belongs to the class-I aminoacyl-tRNA synthetase family. Monomer.

Its subcellular location is the cytoplasm. It carries out the reaction tRNA(Arg) + L-arginine + ATP = L-arginyl-tRNA(Arg) + AMP + diphosphate. The polypeptide is Arginine--tRNA ligase (Haemophilus influenzae (strain PittEE)).